Reading from the N-terminus, the 443-residue chain is Exodeoxyribonuclease 7 large subunit (443 aa).

It belongs to the XseA family. Heterooligomer composed of large and small subunits.

The protein resides in the cytoplasm. It carries out the reaction Exonucleolytic cleavage in either 5'- to 3'- or 3'- to 5'-direction to yield nucleoside 5'-phosphates.. Functionally, bidirectionally degrades single-stranded DNA into large acid-insoluble oligonucleotides, which are then degraded further into small acid-soluble oligonucleotides. The protein is Exodeoxyribonuclease 7 large subunit of Vibrio vulnificus (strain CMCP6).